The sequence spans 226 residues: UPF0758 protein SAK_1186 (226 aa).

Residues 103–225 (QILSSEQLAR…YYSFREEADI (123 aa)) form the MPN domain. Positions 174, 176, and 187 each coordinate Zn(2+). The JAMM motif motif lies at 174–187 (HNHPSGSPKPSESD).

The protein belongs to the UPF0758 family.

In Streptococcus agalactiae serotype Ia (strain ATCC 27591 / A909 / CDC SS700), this protein is UPF0758 protein SAK_1186.